The primary structure comprises 317 residues: Apolipoprotein E (317 aa).

Positions 1–18 (MKVLWAALLVTFLAGCQA) are cleaved as a signal peptide. 8 consecutive repeat copies span residues 80–101 (TLMDETMKELKAYKSELEEQLS), 102–123 (PVAEETRARLSKELQAAQARLG), 124–145 (ADMEDVRSRLVQYRSEVQAMLG), 146–167 (QSTEELRARLASHLRKLRKRLL), 168–189 (RDADDLQKRLAVYQAGAREGAE), 190–211 (RGVSAIRERLGPLVEQGRVRAA), 212–233 (TVGSLASQPLQERAQALGERLR), and 234–255 (ARMEEMGSRTRDRLDEVKEQVA). An 8 X 22 AA approximate tandem repeats region spans residues 80-255 (TLMDETMKEL…RLDEVKEQVA (176 aa)). Residue M143 is modified to Methionine sulfoxide. S147 bears the Phosphoserine mark. The tract at residues 158 to 168 (HLRKLRKRLLR) is LDL and other lipoprotein receptors binding. 162–165 (LRKR) is a heparin binding site. The segment at 210–290 (AATVGSLASQ…SWFEPLVEDM (81 aa)) is lipid-binding and lipoprotein association. 229-236 (GERLRARM) contributes to the heparin binding site. The segment at 266 to 317 (QQISLQAEAFQARLKSWFEPLVEDMQRQWAGLVEKVQAAVGASTAPVPSDNH) is homooligomerization. The interval 278–290 (RLKSWFEPLVEDM) is specificity for association with VLDL.

Belongs to the apolipoprotein A1/A4/E family. Homotetramer. May interact with ABCA1; functionally associated with ABCA1 in the biogenesis of HDLs. May interact with APP/A4 amyloid-beta peptide; the interaction is extremely stable in vitro but its physiological significance is unclear. May interact with MAPT. May interact with MAP2. In the cerebrospinal fluid, interacts with secreted SORL1. Interacts with PMEL; this allows the loading of PMEL luminal fragment on ILVs to induce fibril nucleation. APOE exists as multiple glycosylated and sialylated glycoforms within cells and in plasma. The extent of glycosylation and sialylation are tissue and context specific. Post-translationally, glycated in plasma VLDL. In terms of processing, phosphorylated by FAM20C in the extracellular medium.

It localises to the secreted. Its subcellular location is the extracellular space. It is found in the extracellular matrix. The protein resides in the extracellular vesicle. The protein localises to the endosome. It localises to the multivesicular body. Functionally, APOE is an apolipoprotein, a protein associating with lipid particles, that mainly functions in lipoprotein-mediated lipid transport between organs via the plasma and interstitial fluids. APOE is a core component of plasma lipoproteins and is involved in their production, conversion and clearance. Apolipoproteins are amphipathic molecules that interact both with lipids of the lipoprotein particle core and the aqueous environment of the plasma. As such, APOE associates with chylomicrons, chylomicron remnants, very low density lipoproteins (VLDL) and intermediate density lipoproteins (IDL) but shows a preferential binding to high-density lipoproteins (HDL). It also binds a wide range of cellular receptors including the LDL receptor/LDLR, the LDL receptor-related proteins LRP1, LRP2 and LRP8 and the very low-density lipoprotein receptor/VLDLR that mediate the cellular uptake of the APOE-containing lipoprotein particles. Finally, APOE also has a heparin-binding activity and binds heparan-sulfate proteoglycans on the surface of cells, a property that supports the capture and the receptor-mediated uptake of APOE-containing lipoproteins by cells. A main function of APOE is to mediate lipoprotein clearance through the uptake of chylomicrons, VLDLs, and HDLs by hepatocytes. APOE is also involved in the biosynthesis by the liver of VLDLs as well as their uptake by peripheral tissues ensuring the delivery of triglycerides and energy storage in muscle, heart and adipose tissues. By participating in the lipoprotein-mediated distribution of lipids among tissues, APOE plays a critical role in plasma and tissues lipid homeostasis. APOE is also involved in two steps of reverse cholesterol transport, the HDLs-mediated transport of cholesterol from peripheral tissues to the liver, and thereby plays an important role in cholesterol homeostasis. First, it is functionally associated with ABCA1 in the biogenesis of HDLs in tissues. Second, it is enriched in circulating HDLs and mediates their uptake by hepatocytes. APOE also plays an important role in lipid transport in the central nervous system, regulating neuron survival and sprouting. The protein is Apolipoprotein E (APOE) of Papio anubis (Olive baboon).